The sequence spans 521 residues: Cyclic AMP-responsive element-binding protein 3-like protein 2 (521 aa).

Residues 1-378 (MEVLESGEQS…CKLAGTQTGT (378 aa)) lie on the Cytoplasmic side of the membrane. Residue S93 is modified to Phosphoserine. K178 participates in a covalent cross-link: Glycyl lysine isopeptide (Lys-Gly) (interchain with G-Cter in SUMO2). The residue at position 191 (S191) is a Phosphoserine. Positions 196 to 264 (SVDQLHLPPT…PHKLQGSGPL (69 aa)) are disordered. Low complexity predominate over residues 208–220 (SSHSSDSEGSLSP). The region spanning 294–357 (ALKKIRRKIK…RTLLQQLQKL (64 aa)) is the bZIP domain. Residues 296-325 (KKIRRKIKNKISAQESRRKKKEYMDSLEKK) form a basic motif region. The interval 336–357 (LRKKVEVLENTNRTLLQQLQKL) is leucine-zipper. The chain crosses the membrane as a helical; Signal-anchor for type II membrane protein span at residues 379-399 (CLMVVVLCFAVAFGSLFQGYG). At 400-521 (LYPSATKMAL…ELERRVNATF (122 aa)) the chain is on the lumenal side. The S1P recognition motif lies at 427-430 (RNLL). N-linked (GlcNAc...) asparagine glycosylation is found at N505 and N518.

It belongs to the bZIP family. ATF subfamily. Binds DNA as a dimer. Post-translationally, upon ER stress, translocated to the Golgi apparatus, where it is processed by regulated intramembrane proteolysis (RIP) to release the cytosol-facing N-terminal transcription factor domain. The cleavage is performed sequentially by site-1 and site-2 proteases (S1P/MBTPS1 and S2P/MBTPS2). N-glycosylated. In terms of processing, ubiquitinated by HRD1/SYVN1; undergoes 'Lys-48'-linked ubiquitination, followed by rapid proteasomal degradation under normal conditions. Upon ER stress, SYVN1 E3 ubiquitin-protein ligase dissociates from its substrate, ubiquitination does not occur and CREB3L2 is stabilized.

The protein resides in the endoplasmic reticulum membrane. Its subcellular location is the nucleus. Transcription factor involved in unfolded protein response (UPR). In the absence of endoplasmic reticulum (ER) stress, inserted into ER membranes, with N-terminal DNA-binding and transcription activation domains oriented toward the cytosolic face of the membrane. In response to ER stress, transported to the Golgi, where it is cleaved in a site-specific manner by resident proteases S1P/MBTPS1 and S2P/MBTPS2. The released N-terminal cytosolic domain is translocated to the nucleus to effect transcription of specific target genes. Plays a critical role in chondrogenesis by activating the transcription of SEC23A, which promotes the transport and secretion of cartilage matrix proteins, and possibly that of ER biogenesis-related genes. In a neuroblastoma cell line, protects cells from ER stress-induced death. In vitro activates transcription of target genes via direct binding to the CRE site. In Rattus norvegicus (Rat), this protein is Cyclic AMP-responsive element-binding protein 3-like protein 2 (Creb3l2).